The chain runs to 574 residues: MALLCSALSNSTHPSFRSHIGANSENLWHLSADPAQKSKRRCNLTLSSRAARISSALESAKQVKPWQVPKRDWFPPEFMFGAASAAYQIEGAWNEGGKGPSSWDNFCHSHPDRIMDKSNADVAANSYYMYKEDVRMLKEIGMDSYRFSISWPRILPKGTLDGGINHEGIQYYNDLLDCLIENGIKPYITLFHWDTPQALADEYKDFLDRRIVKDYTDYATVCFEHFGDKVKNWFTFNEPHSFCGLGYGTGLHAPGARCSAGMTCVIPEEDALRNPYIVGHNLLLAHAETVDVYNKFYKGDDGQIGMVLDVMAYEPYGNNFLDQQAQERAIDFHIGWFLEPMVRGDYPFSMRSLVGDRLPFFTKSEQEKLVSSYDFVGINYYTSRFAKHIDISPEFIPKINTDDVYSNPEVNDSNGIPIGPDVGMYFIYSYPKGLKNILLRMKEKYGNPPIYITENGTADMDGWGNPPMTDPLDDPLRIEYLQQHMTAIKEAIDLGRRTLRGHFTWSLIDNFEWSLGYLSRFGIVYIDRNDGCKRIMKKSAKWLKEFNGATKKLNNKILGASSCCSGVTHGGGTA.

A chloroplast-targeting transit peptide spans Met1 to Ser55. Residues Gln88, His192, and Asn237–Glu238 contribute to the a beta-D-glucoside site. The active-site Proton donor is Glu238. Cysteines 258 and 264 form a disulfide. A beta-D-glucoside-binding positions include Tyr381, Glu454, Trp505, Glu512 to Trp513, and Phe521. Glu454 acts as the Nucleophile in catalysis.

The protein belongs to the glycosyl hydrolase 1 family. In terms of assembly, homo- and heteromultimer with P60B in a 1:1 stoichiometry. Aggregates to form the fibrillar stromacentre. Expressed in caryopses, coleoptiles, primary leaves, and etiolated and green seedlings, but not in roots.

It localises to the plastid. Its subcellular location is the chloroplast stroma. It catalyses the reaction avenacoside B + H2O = 26-desgluco-avenacoside B + D-glucose. Its activity is regulated as follows. Inhibited by N-(3-Dimethylaminopropyl)-N'-ethylcarbodiimide hydrochloride (EDC). Functionally, beta-glucosidase acting as a preformed defense system. Hydrolyzes the bisdesmosides avenacosides A and B to 26-desgluco-avenacosides exhibiting fungicidal activity. Can use beta-fucoside &gt; beta-glucoside &gt; beta-galactoside &gt; beta-xyloside as substrates, but not alpha-glycosides, beta-thioglucosides and disaccharides. The protein is Avenacosidase 1 (P60A) of Avena sativa (Oat).